A 404-amino-acid chain; its full sequence is Probable thioredoxin reductase ARB_06224 (404 aa).

An N-terminal signal peptide occupies residues 1–22; it reads MGVQRLALALIAFTSALTSVIA. Residue 67–75 coordinates FAD; sequence DEGIYRNGA. Cys-172 and Cys-175 are disulfide-bonded. The N-linked (GlcNAc...) asparagine glycan is linked to Asn-213. 334–343 lines the FAD pocket; that stretch reads DANNDGSTNG.

The protein belongs to the class-II pyridine nucleotide-disulfide oxidoreductase family. Homodimer. Requires FAD as cofactor.

It is found in the secreted. The enzyme catalyses [thioredoxin]-dithiol + NADP(+) = [thioredoxin]-disulfide + NADPH + H(+). The protein is Probable thioredoxin reductase ARB_06224 of Arthroderma benhamiae (strain ATCC MYA-4681 / CBS 112371) (Trichophyton mentagrophytes).